A 623-amino-acid polypeptide reads, in one-letter code: Chaperone protein DnaK (623 aa).

At Thr-197 the chain carries Phosphothreonine; by autocatalysis. Residues Ala-595–Asp-615 show a composition bias toward basic and acidic residues. A disordered region spans residues Ala-595–Glu-623.

It belongs to the heat shock protein 70 family.

Acts as a chaperone. The polypeptide is Chaperone protein DnaK (Campylobacter jejuni subsp. jejuni serotype O:6 (strain 81116 / NCTC 11828)).